The chain runs to 476 residues: UDP-N-acetylmuramate--L-alanine ligase (476 aa).

123–129 (GTHGKTT) is a binding site for ATP.

Belongs to the MurCDEF family.

It is found in the cytoplasm. It carries out the reaction UDP-N-acetyl-alpha-D-muramate + L-alanine + ATP = UDP-N-acetyl-alpha-D-muramoyl-L-alanine + ADP + phosphate + H(+). Its pathway is cell wall biogenesis; peptidoglycan biosynthesis. Cell wall formation. The sequence is that of UDP-N-acetylmuramate--L-alanine ligase from Nitrosococcus oceani (strain ATCC 19707 / BCRC 17464 / JCM 30415 / NCIMB 11848 / C-107).